A 120-amino-acid polypeptide reads, in one-letter code: Large ribosomal subunit protein eL18 (120 aa).

The protein belongs to the eukaryotic ribosomal protein eL18 family.

The polypeptide is Large ribosomal subunit protein eL18 (Thermoplasma acidophilum (strain ATCC 25905 / DSM 1728 / JCM 9062 / NBRC 15155 / AMRC-C165)).